Reading from the N-terminus, the 384-residue chain is Brix domain-containing protein F44G4.1 (384 aa).

2 disordered regions span residues 1 to 58 (MAPK…KVVK) and 82 to 135 (SKAT…PQKE). Over residues 18 to 48 (FVEEEVTGDVDEDGFEQAEDMPDEVDSDEDE) the composition is skewed to acidic residues. A compositionally biased stretch (basic residues) spans 96–114 (LPKSQRGKALKRALRKDKR). Residues 115–127 (ARQGERAQIRDEL) show a composition bias toward basic and acidic residues. In terms of domain architecture, Brix spans 177–360 (PKVMITMTPK…LKWLQKGTFD (184 aa)).

The sequence is that of Brix domain-containing protein F44G4.1 from Caenorhabditis elegans.